Here is a 1758-residue protein sequence, read N- to C-terminus: Y' element ATP-dependent helicase YIL177C (1758 aa).

Residues 668–845 (EIYMADTPSV…LQRIGLTGLA (178 aa)) form the Helicase ATP-binding domain. Residue 681–688 (APPGYGKT) participates in ATP binding. A Helicase C-terminal domain is found at 900-1051 (ALKLLLALFE…EFYGLESKKG (152 aa)). Low complexity predominate over residues 1142 to 1360 (NVRTNATTNA…ATTTESTNAS (219 aa)). Residues 1142–1384 (NVRTNATTNA…RFHPVTDINK (243 aa)) are disordered. The segment covering 1361–1384 (AKEDANKDGNAEDNRFHPVTDINK) has biased composition (basic and acidic residues).

Belongs to the helicase family. Yeast subtelomeric Y' repeat subfamily.

Catalyzes DNA unwinding and is involved in telomerase-independent telomere maintenance. In Saccharomyces cerevisiae (strain ATCC 204508 / S288c) (Baker's yeast), this protein is Y' element ATP-dependent helicase YIL177C.